The sequence spans 420 residues: Glucose-1-phosphate adenylyltransferase (420 aa).

Alpha-D-glucose 1-phosphate is bound by residues Tyr-107, Gly-172, 187 to 188, and Ser-205; that span reads EK.

This sequence belongs to the bacterial/plant glucose-1-phosphate adenylyltransferase family. Homotetramer.

It carries out the reaction alpha-D-glucose 1-phosphate + ATP + H(+) = ADP-alpha-D-glucose + diphosphate. It participates in glycan biosynthesis; glycogen biosynthesis. Functionally, involved in the biosynthesis of ADP-glucose, a building block required for the elongation reactions to produce glycogen. Catalyzes the reaction between ATP and alpha-D-glucose 1-phosphate (G1P) to produce pyrophosphate and ADP-Glc. In Rhizobium etli (strain CIAT 652), this protein is Glucose-1-phosphate adenylyltransferase.